Here is a 963-residue protein sequence, read N- to C-terminus: Seizure 6-like protein (963 aa).

Positions 1 to 31 (MPVARPQAAGPDRISLFLVAFLLGSPAAAQA) are cleaved as a signal peptide. Disordered stretches follow at residues 28–63 (AAQA…GVTS), 116–150 (RPLA…TAPA), and 164–204 (LPHS…TTTS). Residues 32-897 (EDGGPEGEMH…ESSLEGGNMA (866 aa)) lie on the Extracellular side of the membrane. The segment covering 47 to 59 (LLPSASLESSLEE) has biased composition (low complexity). Positions 120 to 135 (TPTTLQRLGSPASATT) are enriched in polar residues. Residues 191–204 (TGSASEESQETTTS) show a composition bias toward low complexity. A disulfide bridge connects residues Cys-221 and Cys-248. Positions 221 to 329 (CGVSFSDPEG…GTFQLHYQAF (109 aa)) constitute a CUB 1 domain. 3 N-linked (GlcNAc...) asparagine glycosylation sites follow: Asn-251, Asn-268, and Asn-290. The Sushi 1 domain maps to 331-390 (LSCPFPRRPDAGEVTVMDLHSGGVAHFHCHLGYELQGAKTLTCINASKPHWSSQEPVCSA). Intrachain disulfides connect Cys-333/Cys-373, Cys-359/Cys-388, and Cys-392/Cys-419. N-linked (GlcNAc...) asparagine glycosylation is found at Asn-375, Asn-398, Asn-414, Asn-454, Asn-516, and Asn-558. The 111-residue stretch at 392–502 (CGGAVHNATI…SAFNIRFEAF (111 aa)) folds into the CUB 2 domain. Residues 505 to 566 (GHCYEPYIQN…WNDTEPLCRA (62 aa)) form the Sushi 2 domain. Disulfide bonds link Cys-507-Cys-549, Cys-534-Cys-564, and Cys-568-Cys-594. Residues 568-679 (CGGELSAVAG…QGFIMNYIEV (112 aa)) enclose the CUB 3 domain. Asn-614 and Asn-682 each carry an N-linked (GlcNAc...) asparagine glycan. Sushi domains lie at 683 to 742 (DSCS…FCEK), 744 to 807 (MYCT…HCVS), and 811 to 872 (LACD…ICKV). 6 disulfide bridges follow: Cys-685–Cys-727, Cys-713–Cys-740, Cys-746–Cys-788, Cys-774–Cys-805, Cys-813–Cys-855, and Cys-841–Cys-870. Residues 898–918 (LAIFIPVLLISLLLGGAYIYV) traverse the membrane as a helical segment. At 919–963 (TRCRQYSSLRLPLMYSHPYSQITVETEFDNPIYETGETREYEVSI) the chain is on the cytoplasmic side.

Belongs to the SEZ6 family. As to expression, expressed exclusively in the brain, predominantly in neurons. Wide expression in the gray matter of the brain with high levels in the olfactory bulb, anterior olfactory nuclei, hippocampal formation and cerebellar cortex. Detected diffusely and weakly in the white matter, such as the corpus callosum and cerebellar medulla. In the cerebellar cortex, intensely expressed in Purkinje cells and granule cells. Detected also in interneurons in the molecular layer.

Its subcellular location is the cell membrane. It localises to the endoplasmic reticulum membrane. Its function is as follows. Candidate tumor suppressor gene. May contribute to specialized endoplasmic reticulum functions in neurons. The chain is Seizure 6-like protein (Sez6l) from Mus musculus (Mouse).